The following is a 301-amino-acid chain: tRNA uridine(34) hydroxylase (301 aa).

The region spanning 121–212 (NDKDTLVLDS…YLKNIKKKES (92 aa)) is the Rhodanese domain. C172 serves as the catalytic Cysteine persulfide intermediate.

Belongs to the TrhO family.

The enzyme catalyses uridine(34) in tRNA + AH2 + O2 = 5-hydroxyuridine(34) in tRNA + A + H2O. Functionally, catalyzes oxygen-dependent 5-hydroxyuridine (ho5U) modification at position 34 in tRNAs. This chain is tRNA uridine(34) hydroxylase, found in Pelagibacter ubique (strain HTCC1062).